The chain runs to 336 residues: Probable aquaglyceroporin-2 (336 aa).

The interval 1–46 is disordered; that stretch reads MPISTINDSISESSVHKSSIPTKVEMSQNEKYSEAPSEAPTIPPPP. At 1 to 64 the chain is on the cytoplasmic side; it reads MPISTINDSI…RENCQDAFSE (64 aa). Positions 9 to 19 are enriched in low complexity; sequence SISESSVHKSS. The helical transmembrane segment at 65–85 threads the bilayer; that stretch reads FFGTFVLLLFGDGVVAQVVLS. Topologically, residues 86 to 94 are extracellular; that stretch reads RGTKGDYQS. Residues 95 to 115 form a helical membrane-spanning segment; that stretch reads ISWGWGLGVMLGVYVGGKSGG. The Cytoplasmic portion of the chain corresponds to 116–135; it reads HLNPAVTLANCLFRGHPWRK. Positions 118–120 match the NPA 1 motif; it reads NPA. The helical transmembrane segment at 136-156 threads the bilayer; that stretch reads FPIYAVAQVLGAMAAAAVVYG. Residues 157-195 are Extracellular-facing; that stretch reads NYKSAIDAYEGGPGIRTVIGENATAGVFCTYPAEFMTRT. Residue Asn-178 is glycosylated (N-linked (GlcNAc...) asparagine). A helical membrane pass occupies residues 196 to 216; it reads GMFFSEFIASTILQFVIFAMA. Residues 217–223 lie on the Cytoplasmic side of the membrane; it reads DSANIGA. Residues 224-244 traverse the membrane as a helical segment; sequence GPLMPLGLFFLIFGIGACFGW. Over 245–280 the chain is Extracellular; sequence ETGYAINLARDFGPRLVSYMLGYGSEVWSAGGYYFW. The short motif at 251 to 253 is the NPA 2 element; that stretch reads NLA. The helical transmembrane segment at 281 to 301 threads the bilayer; that stretch reads IPMVAPFFGCAFGGFLYDVFI. The Cytoplasmic segment spans residues 302–336; the sequence is YTGPSPINTPGMGFGRLVSPRRSTWSNTYNANSPV.

Belongs to the MIP/aquaporin (TC 1.A.8) family.

The protein localises to the membrane. It catalyses the reaction H2O(in) = H2O(out). It carries out the reaction glycerol(in) = glycerol(out). Its function is as follows. Probable water/glycerol channel that may have redundant functions with FgAQP4. The chain is Probable aquaglyceroporin-2 from Gibberella zeae (strain ATCC MYA-4620 / CBS 123657 / FGSC 9075 / NRRL 31084 / PH-1) (Wheat head blight fungus).